Here is a 268-residue protein sequence, read N- to C-terminus: GTP cyclohydrolase FolE2 (268 aa).

The protein belongs to the GTP cyclohydrolase IV family.

It catalyses the reaction GTP + H2O = 7,8-dihydroneopterin 3'-triphosphate + formate + H(+). The protein operates within cofactor biosynthesis; 7,8-dihydroneopterin triphosphate biosynthesis; 7,8-dihydroneopterin triphosphate from GTP: step 1/1. Its function is as follows. Converts GTP to 7,8-dihydroneopterin triphosphate. The polypeptide is GTP cyclohydrolase FolE2 (Janthinobacterium sp. (strain Marseille) (Minibacterium massiliensis)).